The primary structure comprises 523 residues: Galactarate dehydratase (L-threo-forming) (523 aa).

It belongs to the UxaA family. As to quaternary structure, homodimer. Fe(2+) is required as a cofactor.

It carries out the reaction galactarate = 5-dehydro-4-deoxy-D-glucarate + H2O. It functions in the pathway carbohydrate acid metabolism; galactarate degradation; D-glycerate from galactarate: step 1/3. Catalyzes the dehydration of galactarate to form 5-dehydro-4-deoxy-D-glucarate (5-KDG). In Escherichia coli (strain K12), this protein is Galactarate dehydratase (L-threo-forming).